A 212-amino-acid polypeptide reads, in one-letter code: 3-isopropylmalate dehydratase small subunit (212 aa).

It belongs to the LeuD family. LeuD type 1 subfamily. As to quaternary structure, heterodimer of LeuC and LeuD.

The catalysed reaction is (2R,3S)-3-isopropylmalate = (2S)-2-isopropylmalate. The protein operates within amino-acid biosynthesis; L-leucine biosynthesis; L-leucine from 3-methyl-2-oxobutanoate: step 2/4. In terms of biological role, catalyzes the isomerization between 2-isopropylmalate and 3-isopropylmalate, via the formation of 2-isopropylmaleate. The sequence is that of 3-isopropylmalate dehydratase small subunit from Beutenbergia cavernae (strain ATCC BAA-8 / DSM 12333 / CCUG 43141 / JCM 11478 / NBRC 16432 / NCIMB 13614 / HKI 0122).